The following is a 236-amino-acid chain: 2-C-methyl-D-erythritol 4-phosphate cytidylyltransferase (236 aa).

This sequence belongs to the IspD/TarI cytidylyltransferase family. IspD subfamily.

It carries out the reaction 2-C-methyl-D-erythritol 4-phosphate + CTP + H(+) = 4-CDP-2-C-methyl-D-erythritol + diphosphate. The protein operates within isoprenoid biosynthesis; isopentenyl diphosphate biosynthesis via DXP pathway; isopentenyl diphosphate from 1-deoxy-D-xylulose 5-phosphate: step 2/6. Functionally, catalyzes the formation of 4-diphosphocytidyl-2-C-methyl-D-erythritol from CTP and 2-C-methyl-D-erythritol 4-phosphate (MEP). This chain is 2-C-methyl-D-erythritol 4-phosphate cytidylyltransferase, found in Burkholderia cenocepacia (strain ATCC BAA-245 / DSM 16553 / LMG 16656 / NCTC 13227 / J2315 / CF5610) (Burkholderia cepacia (strain J2315)).